The sequence spans 291 residues: tRNA U34 carboxymethyltransferase (291 aa).

Residues Lys61, Trp75, Lys80, Gly100, 122–124 (DPS), 149–150 (VE), Tyr169, and Arg284 each bind carboxy-S-adenosyl-L-methionine.

This sequence belongs to the class I-like SAM-binding methyltransferase superfamily. CmoB family. As to quaternary structure, homotetramer.

It catalyses the reaction carboxy-S-adenosyl-L-methionine + 5-hydroxyuridine(34) in tRNA = 5-carboxymethoxyuridine(34) in tRNA + S-adenosyl-L-homocysteine + H(+). In terms of biological role, catalyzes carboxymethyl transfer from carboxy-S-adenosyl-L-methionine (Cx-SAM) to 5-hydroxyuridine (ho5U) to form 5-carboxymethoxyuridine (cmo5U) at position 34 in tRNAs. The chain is tRNA U34 carboxymethyltransferase from Campylobacter jejuni subsp. jejuni serotype O:23/36 (strain 81-176).